We begin with the raw amino-acid sequence, 1319 residues long: DNA-directed RNA polymerase subunit beta' (1319 aa).

Residues Cys60, Cys62, Cys75, and Cys78 each contribute to the Zn(2+) site. Asp535, Asp537, and Asp539 together coordinate Mg(2+). Residues Cys890, Cys971, Cys978, and Cys981 each contribute to the Zn(2+) site.

It belongs to the RNA polymerase beta' chain family. In terms of assembly, the RNAP catalytic core consists of 2 alpha, 1 beta, 1 beta' and 1 omega subunit. When a sigma factor is associated with the core the holoenzyme is formed, which can initiate transcription. It depends on Mg(2+) as a cofactor. Zn(2+) serves as cofactor.

It catalyses the reaction RNA(n) + a ribonucleoside 5'-triphosphate = RNA(n+1) + diphosphate. Functionally, DNA-dependent RNA polymerase catalyzes the transcription of DNA into RNA using the four ribonucleoside triphosphates as substrates. This Mycobacteroides abscessus (strain ATCC 19977 / DSM 44196 / CCUG 20993 / CIP 104536 / JCM 13569 / NCTC 13031 / TMC 1543 / L948) (Mycobacterium abscessus) protein is DNA-directed RNA polymerase subunit beta'.